The following is a 348-amino-acid chain: Large ribosomal subunit protein uL3m (348 aa).

Residues 1-40 constitute a mitochondrion transit peptide; that stretch reads MPGWRLLAWAGARVLDRGTGGLGTALGSGNRTDICVLVRS.

Belongs to the universal ribosomal protein uL3 family. As to quaternary structure, component of the mitochondrial ribosome large subunit (39S) which comprises a 16S rRNA and about 50 distinct proteins.

It is found in the mitochondrion. The polypeptide is Large ribosomal subunit protein uL3m (MRPL3) (Bos taurus (Bovine)).